The following is a 166-amino-acid chain: MPDATLPACFLSLLAFTSACYFQNCPRGGKRAMSDLELRQCLPCGPGGKGRCFGPSICCGDELGCFVGTAEALRCQEENYLPSPCQSGQKPCGSGGRCAAAGICCNDESCVTEPECREGVGFPRRVRANDRSNATLLDGPSGALLLRLVQLAGAPEPAEPAQPGVY.

Residues 1 to 19 (MPDATLPACFLSLLAFTSA) form the signal peptide. Residues Cys20 and Cys25 are joined by a disulfide bond. Gly28 carries the post-translational modification Glycine amide. Intrachain disulfides connect Cys41–Cys85, Cys44–Cys58, Cys52–Cys75, Cys59–Cys65, Cys92–Cys104, Cys98–Cys116, and Cys105–Cys110. Asn133 carries N-linked (GlcNAc...) asparagine glycosylation.

Belongs to the vasopressin/oxytocin family. As to quaternary structure, interacts with vasopressin receptors V1bR/AVPR1B (Ki=85 pM), V1aR/AVPR1A (Ki=0.6 nM) and V2R/AVPR2 (Ki=4.9 nM). Interacts with oxytocin receptor (OXTR) (Ki=110 nM).

Its subcellular location is the secreted. In terms of biological role, neurophysin 2 specifically binds vasopressin. Functionally, vasopressin has a direct antidiuretic action on the kidney, it also causes vasoconstriction of the peripheral vessels. Acts by binding to vasopressin receptors (V1bR/AVPR1B, V1aR/AVPR1A, and V2R/AVPR2). This chain is Vasopressin-neurophysin 2-copeptin (AVP), found in Bos taurus (Bovine).